Consider the following 1412-residue polypeptide: DNA-directed RNA polymerase subunit beta' (1412 aa).

Zn(2+)-binding residues include Cys70, Cys72, Cys85, and Cys88. Asp460, Asp462, and Asp464 together coordinate Mg(2+). Positions 819, 893, 900, and 903 each coordinate Zn(2+). Residues 1392–1412 form a disordered region; the sequence is EEAFEFGTPSAPAEEPQHPAE.

This sequence belongs to the RNA polymerase beta' chain family. As to quaternary structure, the RNAP catalytic core consists of 2 alpha, 1 beta, 1 beta' and 1 omega subunit. When a sigma factor is associated with the core the holoenzyme is formed, which can initiate transcription. The cofactor is Mg(2+). Requires Zn(2+) as cofactor.

The catalysed reaction is RNA(n) + a ribonucleoside 5'-triphosphate = RNA(n+1) + diphosphate. Its function is as follows. DNA-dependent RNA polymerase catalyzes the transcription of DNA into RNA using the four ribonucleoside triphosphates as substrates. This chain is DNA-directed RNA polymerase subunit beta', found in Burkholderia mallei (strain NCTC 10247).